A 233-amino-acid chain; its full sequence is Large ribosomal subunit protein uL1 (233 aa).

It belongs to the universal ribosomal protein uL1 family. As to quaternary structure, part of the 50S ribosomal subunit.

Binds directly to 23S rRNA. The L1 stalk is quite mobile in the ribosome, and is involved in E site tRNA release. Its function is as follows. Protein L1 is also a translational repressor protein, it controls the translation of the L11 operon by binding to its mRNA. This Psychrobacter sp. (strain PRwf-1) protein is Large ribosomal subunit protein uL1.